A 338-amino-acid chain; its full sequence is Ferredoxin--NADP reductase (338 aa).

Positions 36, 44, 49, 89, 123, 290, and 331 each coordinate FAD.

This sequence belongs to the ferredoxin--NADP reductase type 2 family. As to quaternary structure, homodimer. FAD serves as cofactor.

The catalysed reaction is 2 reduced [2Fe-2S]-[ferredoxin] + NADP(+) + H(+) = 2 oxidized [2Fe-2S]-[ferredoxin] + NADPH. The polypeptide is Ferredoxin--NADP reductase (Anaplasma phagocytophilum (strain HZ)).